We begin with the raw amino-acid sequence, 245 residues long: Uridylate kinase (245 aa).

Residue 20 to 23 (KLSG) coordinates ATP. G60 is a UMP binding site. G61 and R65 together coordinate ATP. UMP is bound by residues D80 and 141 to 148 (AGLPYFST). Positions 175 and 178 each coordinate ATP.

Belongs to the UMP kinase family. Homohexamer.

It localises to the cytoplasm. The enzyme catalyses UMP + ATP = UDP + ADP. It functions in the pathway pyrimidine metabolism; CTP biosynthesis via de novo pathway; UDP from UMP (UMPK route): step 1/1. With respect to regulation, inhibited by UTP. Functionally, catalyzes the reversible phosphorylation of UMP to UDP. The polypeptide is Uridylate kinase (Arthrobacter sp. (strain FB24)).